A 289-amino-acid chain; its full sequence is E3 ubiquitin-protein ligase MARCHF8 (289 aa).

The interval Met-1 to Thr-68 is disordered. The segment covering Lys-25–Leu-39 has biased composition (basic and acidic residues). Residues Ser-50–Ser-64 show a composition bias toward low complexity. The RING-CH-type zinc-finger motif lies at Val-70–Glu-131. Zn(2+)-binding residues include Cys-78, Cys-81, Cys-95, Cys-97, His-105, Cys-108, Cys-121, and Cys-124. 2 helical membrane passes run Cys-155 to Ile-175 and Phe-195 to Val-215.

As to quaternary structure, interacts with CD86.

Its subcellular location is the golgi apparatus membrane. The protein localises to the endoplasmic reticulum membrane. It localises to the cytoplasmic vesicle membrane. It is found in the lysosome membrane. The protein resides in the early endosome membrane. The enzyme catalyses S-ubiquitinyl-[E2 ubiquitin-conjugating enzyme]-L-cysteine + [acceptor protein]-L-lysine = [E2 ubiquitin-conjugating enzyme]-L-cysteine + N(6)-ubiquitinyl-[acceptor protein]-L-lysine.. It functions in the pathway protein modification; protein ubiquitination. In terms of biological role, E3 ubiquitin-protein ligase that plays several important roles in innate immunity and adaptive immunity. Mediates ubiquitination of CD86 and MHC class II proteins, such as HLA-DR alpha and beta, and promotes their subsequent endocytosis and sorting to lysosomes via multivesicular bodies. Possesses a very broad antiviral activity by specifically inactivating different viral fusion proteins. Targets and ubiquitinates cytoplasmic lysine residues of viral envelope glycoproteins with single transmembrane domains leading to their lysosomal degradation. Mediates the regulation of constitutive ubiquitination and trafficking of the viral restriction factor BST2 within the endocytic pathway. Plays a role in maintenance of immune tolerance to self by promoting the turnover and proteasomal degradation of PD-L1/CD274 via ubiquitination. Catalyzes the 'Lys-63'-linked polyubiquitylation of cGAS thereby inhibiting its DNA binding ability and impairing its antiviral innate immunity. Negatively regulates IL7-mediated T-cell homeostasis by mediating 'Lys-27'-linked polyubiquitination of IL7R, leading to its lysosomal degradation. The polypeptide is E3 ubiquitin-protein ligase MARCHF8 (MARCHF8) (Bos taurus (Bovine)).